A 626-amino-acid polypeptide reads, in one-letter code: Phosphomethylpyrimidine synthase (626 aa).

Residues 1–22 form a disordered region; it reads MTKQEKAINLSESAQVDQQSVQ. Over residues 10-22 the composition is skewed to polar residues; sequence LSESAQVDQQSVQ. Substrate is bound by residues Asn232, Met261, Tyr290, His326, 346-348, 387-390, and Glu426; these read SRG and DGLR. Residue His430 participates in Zn(2+) binding. Tyr453 provides a ligand contact to substrate. His494 serves as a coordination point for Zn(2+). [4Fe-4S] cluster-binding residues include Cys574, Cys577, and Cys582.

This sequence belongs to the ThiC family. Homodimer. The cofactor is [4Fe-4S] cluster.

The catalysed reaction is 5-amino-1-(5-phospho-beta-D-ribosyl)imidazole + S-adenosyl-L-methionine = 4-amino-2-methyl-5-(phosphooxymethyl)pyrimidine + CO + 5'-deoxyadenosine + formate + L-methionine + 3 H(+). It functions in the pathway cofactor biosynthesis; thiamine diphosphate biosynthesis. In terms of biological role, catalyzes the synthesis of the hydroxymethylpyrimidine phosphate (HMP-P) moiety of thiamine from aminoimidazole ribotide (AIR) in a radical S-adenosyl-L-methionine (SAM)-dependent reaction. This Pseudomonas putida (strain ATCC 47054 / DSM 6125 / CFBP 8728 / NCIMB 11950 / KT2440) protein is Phosphomethylpyrimidine synthase.